Consider the following 419-residue polypeptide: Histidine--tRNA ligase (419 aa).

It belongs to the class-II aminoacyl-tRNA synthetase family. Homodimer.

Its subcellular location is the cytoplasm. It carries out the reaction tRNA(His) + L-histidine + ATP = L-histidyl-tRNA(His) + AMP + diphosphate + H(+). This Thiobacillus denitrificans (strain ATCC 25259 / T1) protein is Histidine--tRNA ligase.